The chain runs to 221 residues: Deoxyribose-phosphate aldolase (221 aa).

The active-site Proton donor/acceptor is Asp89. The active-site Schiff-base intermediate with acetaldehyde is the Lys151. The Proton donor/acceptor role is filled by Lys180.

This sequence belongs to the DeoC/FbaB aldolase family. DeoC type 1 subfamily.

It localises to the cytoplasm. It carries out the reaction 2-deoxy-D-ribose 5-phosphate = D-glyceraldehyde 3-phosphate + acetaldehyde. It functions in the pathway carbohydrate degradation; 2-deoxy-D-ribose 1-phosphate degradation; D-glyceraldehyde 3-phosphate and acetaldehyde from 2-deoxy-alpha-D-ribose 1-phosphate: step 2/2. Catalyzes a reversible aldol reaction between acetaldehyde and D-glyceraldehyde 3-phosphate to generate 2-deoxy-D-ribose 5-phosphate. The protein is Deoxyribose-phosphate aldolase of Mesomycoplasma hyopneumoniae (strain J / ATCC 25934 / NCTC 10110) (Mycoplasma hyopneumoniae).